We begin with the raw amino-acid sequence, 348 residues long: D-erythrose-4-phosphate dehydrogenase (348 aa).

Residues 12–13 (RI) and Arg81 each bind NAD(+). Residues 154–156 (SCT), Arg200, 213–214 (TK), and Arg236 contribute to the substrate site. Cys155 serves as the catalytic Nucleophile. Asn318 is a binding site for NAD(+).

It belongs to the glyceraldehyde-3-phosphate dehydrogenase family. Epd subfamily. As to quaternary structure, homotetramer.

It localises to the cytoplasm. It catalyses the reaction D-erythrose 4-phosphate + NAD(+) + H2O = 4-phospho-D-erythronate + NADH + 2 H(+). It participates in cofactor biosynthesis; pyridoxine 5'-phosphate biosynthesis; pyridoxine 5'-phosphate from D-erythrose 4-phosphate: step 1/5. Catalyzes the NAD-dependent conversion of D-erythrose 4-phosphate to 4-phosphoerythronate. The polypeptide is D-erythrose-4-phosphate dehydrogenase (Salmonella paratyphi A (strain ATCC 9150 / SARB42)).